A 465-amino-acid polypeptide reads, in one-letter code: Ribulose bisphosphate carboxylase large chain (465 aa).

The residue at position 4 (Lys4) is an N6,N6,N6-trimethyllysine. Substrate contacts are provided by Asn113 and Thr163. Lys165 acts as the Proton acceptor in catalysis. Lys167 lines the substrate pocket. Lys191, Asp193, and Glu194 together coordinate Mg(2+). Lys191 carries the post-translational modification N6-carboxylysine. The active-site Proton acceptor is His284. 3 residues coordinate substrate: Arg285, His317, and Ser369.

This sequence belongs to the RuBisCO large chain family. Type I subfamily. As to quaternary structure, heterohexadecamer of 8 large chains and 8 small chains; disulfide-linked. The disulfide link is formed within the large subunit homodimers. Requires Mg(2+) as cofactor. Post-translationally, the disulfide bond which can form in the large chain dimeric partners within the hexadecamer appears to be associated with oxidative stress and protein turnover.

The protein localises to the plastid. Its subcellular location is the chloroplast. It carries out the reaction 2 (2R)-3-phosphoglycerate + 2 H(+) = D-ribulose 1,5-bisphosphate + CO2 + H2O. The catalysed reaction is D-ribulose 1,5-bisphosphate + O2 = 2-phosphoglycolate + (2R)-3-phosphoglycerate + 2 H(+). In terms of biological role, ruBisCO catalyzes two reactions: the carboxylation of D-ribulose 1,5-bisphosphate, the primary event in carbon dioxide fixation, as well as the oxidative fragmentation of the pentose substrate in the photorespiration process. Both reactions occur simultaneously and in competition at the same active site. The sequence is that of Ribulose bisphosphate carboxylase large chain from Idesia polycarpa (Iigiri tree).